The sequence spans 268 residues: 4-hydroxy-tetrahydrodipicolinate reductase (268 aa).

Residues 7 to 12 (GAGGRM) and E33 contribute to the NAD(+) site. R34 is an NADP(+) binding site. NAD(+)-binding positions include 97–99 (GTT) and 121–124 (SGNM). H155 serves as the catalytic Proton donor/acceptor. A (S)-2,3,4,5-tetrahydrodipicolinate-binding site is contributed by H156. K159 serves as the catalytic Proton donor. 165-166 (GT) provides a ligand contact to (S)-2,3,4,5-tetrahydrodipicolinate.

This sequence belongs to the DapB family.

The protein resides in the cytoplasm. It carries out the reaction (S)-2,3,4,5-tetrahydrodipicolinate + NAD(+) + H2O = (2S,4S)-4-hydroxy-2,3,4,5-tetrahydrodipicolinate + NADH + H(+). It catalyses the reaction (S)-2,3,4,5-tetrahydrodipicolinate + NADP(+) + H2O = (2S,4S)-4-hydroxy-2,3,4,5-tetrahydrodipicolinate + NADPH + H(+). Its pathway is amino-acid biosynthesis; L-lysine biosynthesis via DAP pathway; (S)-tetrahydrodipicolinate from L-aspartate: step 4/4. Functionally, catalyzes the conversion of 4-hydroxy-tetrahydrodipicolinate (HTPA) to tetrahydrodipicolinate. This chain is 4-hydroxy-tetrahydrodipicolinate reductase, found in Brucella abortus (strain 2308).